The sequence spans 349 residues: Histidinol-phosphate aminotransferase (349 aa).

The segment at 1–22 (MVSIRPSVRHTPAYVPGEQPQT) is disordered. Lysine 207 bears the N6-(pyridoxal phosphate)lysine mark.

The protein belongs to the class-II pyridoxal-phosphate-dependent aminotransferase family. Histidinol-phosphate aminotransferase subfamily. Homodimer. Requires pyridoxal 5'-phosphate as cofactor.

The catalysed reaction is L-histidinol phosphate + 2-oxoglutarate = 3-(imidazol-4-yl)-2-oxopropyl phosphate + L-glutamate. It participates in amino-acid biosynthesis; L-histidine biosynthesis; L-histidine from 5-phospho-alpha-D-ribose 1-diphosphate: step 7/9. The protein is Histidinol-phosphate aminotransferase (hisC) of Synechocystis sp. (strain ATCC 27184 / PCC 6803 / Kazusa).